We begin with the raw amino-acid sequence, 482 residues long: tRNA sulfurtransferase (482 aa).

The THUMP domain occupies 61–165; sequence LAIRDALTRI…DDRLLLIKGR (105 aa). Residues 183-184, Lys-265, Gly-287, and Gln-296 each bind ATP; that span reads LI. The cysteines at positions 344 and 456 are disulfide-linked. Residues 404 to 482 enclose the Rhodanese domain; that stretch reads FGPNDVILDI…GFNNVKVYRP (79 aa). The Cysteine persulfide intermediate role is filled by Cys-456.

Belongs to the ThiI family.

It is found in the cytoplasm. It carries out the reaction [ThiI sulfur-carrier protein]-S-sulfanyl-L-cysteine + a uridine in tRNA + 2 reduced [2Fe-2S]-[ferredoxin] + ATP + H(+) = [ThiI sulfur-carrier protein]-L-cysteine + a 4-thiouridine in tRNA + 2 oxidized [2Fe-2S]-[ferredoxin] + AMP + diphosphate. The enzyme catalyses [ThiS sulfur-carrier protein]-C-terminal Gly-Gly-AMP + S-sulfanyl-L-cysteinyl-[cysteine desulfurase] + AH2 = [ThiS sulfur-carrier protein]-C-terminal-Gly-aminoethanethioate + L-cysteinyl-[cysteine desulfurase] + A + AMP + 2 H(+). The protein operates within cofactor biosynthesis; thiamine diphosphate biosynthesis. In terms of biological role, catalyzes the ATP-dependent transfer of a sulfur to tRNA to produce 4-thiouridine in position 8 of tRNAs, which functions as a near-UV photosensor. Also catalyzes the transfer of sulfur to the sulfur carrier protein ThiS, forming ThiS-thiocarboxylate. This is a step in the synthesis of thiazole, in the thiamine biosynthesis pathway. The sulfur is donated as persulfide by IscS. This Shigella sonnei (strain Ss046) protein is tRNA sulfurtransferase.